The chain runs to 496 residues: MGYFYLTAETWTLLVAFVTLLLIYAYWPYGTFKRLGISGPKPVPFFGTMLHYRRGFFTFDEECKKKYGKVWGIYDGRQPVLCVTDPEIIKAVLVKECLSFFTNRRNFHLNGPLYDALSVAEDDQWKRIRSVLSPSFTSGRLKEMFEIMKNHSANLIRSMKKKADKDEPLDLKEFFGSYSMDVVTSTAFSVDIDSLNNPSDPFVTNIKKMLKFDFLNPLFLAVAFFPFLGPILEKFELSFFPKSVTDFFYASLEKIKSNREASQQKSRVDFLQLMIDSQKNSGAQQDKSLTDHEILSQSMIFIFAGYETSSSSLTFLAYNLATNPEVMKKLQEEIDATFPNKAPVHYQPLMEMEYLDCVINESLRLFPIAARLERVAKAAVEINGIVIPKDMVVMIPTWPLHRDPEIWPEPEAFKPERFSKKNKDNIDPYIYMPFGSGPRNCIGMRFALVLIKLAVVEILQQYSFSVCKETEVPFEMDIQGLLAPKRPIQLKLVPRS.

C441 is a binding site for heme.

It belongs to the cytochrome P450 family. It depends on heme as a cofactor. In terms of tissue distribution, highly expressed in liver and intestine. Moderate expression in gill and spleen. Low expression in kidney, brain and heart.

Its subcellular location is the endoplasmic reticulum membrane. It localises to the microsome membrane. It catalyses the reaction an organic molecule + reduced [NADPH--hemoprotein reductase] + O2 = an alcohol + oxidized [NADPH--hemoprotein reductase] + H2O + H(+). Functionally, putative steroid 6-beta-hydroxylase. The polypeptide is Cytochrome P450 3A56 (cyp3a56) (Fundulus heteroclitus (Killifish)).